A 118-amino-acid polypeptide reads, in one-letter code: Group 1 truncated hemoglobin GlbN (118 aa).

Residue His70 coordinates heme.

Belongs to the truncated hemoglobin family. Group I subfamily. As to quaternary structure, monomer. The cofactor is heme.

The protein resides in the membrane. The chain is Group 1 truncated hemoglobin GlbN (glbN) from Nostoc commune.